The chain runs to 96 residues: Co-chaperonin GroES (96 aa).

This sequence belongs to the GroES chaperonin family. In terms of assembly, heptamer of 7 subunits arranged in a ring. Interacts with the chaperonin GroEL.

Its subcellular location is the cytoplasm. Its function is as follows. Together with the chaperonin GroEL, plays an essential role in assisting protein folding. The GroEL-GroES system forms a nano-cage that allows encapsulation of the non-native substrate proteins and provides a physical environment optimized to promote and accelerate protein folding. GroES binds to the apical surface of the GroEL ring, thereby capping the opening of the GroEL channel. In Alcanivorax borkumensis (strain ATCC 700651 / DSM 11573 / NCIMB 13689 / SK2), this protein is Co-chaperonin GroES.